A 271-amino-acid polypeptide reads, in one-letter code: Methylthioribulose-1-phosphate dehydratase (271 aa).

A substrate-binding site is contributed by Cys-123. The Zn(2+) site is built by His-141 and His-143. Residue Glu-166 is the Proton donor/acceptor of the active site. His-231 serves as a coordination point for Zn(2+).

This sequence belongs to the aldolase class II family. MtnB subfamily. The cofactor is Zn(2+).

It is found in the cytoplasm. The catalysed reaction is 5-(methylsulfanyl)-D-ribulose 1-phosphate = 5-methylsulfanyl-2,3-dioxopentyl phosphate + H2O. It participates in amino-acid biosynthesis; L-methionine biosynthesis via salvage pathway; L-methionine from S-methyl-5-thio-alpha-D-ribose 1-phosphate: step 2/6. Its function is as follows. Catalyzes the dehydration of methylthioribulose-1-phosphate (MTRu-1-P) into 2,3-diketo-5-methylthiopentyl-1-phosphate (DK-MTP-1-P). In Candida dubliniensis (strain CD36 / ATCC MYA-646 / CBS 7987 / NCPF 3949 / NRRL Y-17841) (Yeast), this protein is Methylthioribulose-1-phosphate dehydratase.